A 2151-amino-acid polypeptide reads, in one-letter code: Protein PRR14L (2151 aa).

Basic and acidic residues-rich tracts occupy residues 112 to 123 (KRSESMEPKVFR) and 134 to 154 (EPSEGAKEDPHQHSTAAEEKT). Disordered regions lie at residues 112–160 (KRSE…SQED), 206–225 (GTKTDNNEGHKNGNVSKDLS), and 314–350 (QLHGHHNEQPSSTHDSPTATSPLKENSEVSCFTSDLS). Residue Ser157 is modified to Phosphoserine. Polar residues predominate over residues 322–350 (QPSSTHDSPTATSPLKENSEVSCFTSDLS). Ser582 and Ser945 each carry phosphoserine. The segment at 974 to 1017 (SNQNRPDECKSEGQSAKEMLSSDQRETVTEPHGEVNHNQKDLLV) is disordered. Over residues 996 to 1013 (DQRETVTEPHGEVNHNQK) the composition is skewed to basic and acidic residues. Ser1029 carries the post-translational modification Phosphoserine. The span at 1091 to 1103 (DSRSTLSRRELDA) shows a compositional bias: basic and acidic residues. Disordered stretches follow at residues 1091–1115 (DSRSTLSRRELDAAHTGTTGQDSDF), 1178–1226 (DSHY…SCHD), 1782–1802 (TGVHSQTHTQAPPQPPAPLQD), and 1986–2012 (AACPCPQSSPPEQKEAEPEKRPKKVSQ). Residues 1178–1187 (DSHYGQQDKG) show a composition bias toward polar residues. Residues 1188-1201 (TSLRETQEMTEGSR) are compositionally biased toward basic and acidic residues.

This Homo sapiens (Human) protein is Protein PRR14L (PRR14L).